Reading from the N-terminus, the 72-residue chain is SRY-related protein ADW5 (72 aa).

Positions 1–69 (VKRPMNAFMV…KHMADYPDYK (69 aa)) form a DNA-binding region, HMG box.

It is found in the nucleus. The polypeptide is SRY-related protein ADW5 (Alligator mississippiensis (American alligator)).